A 232-amino-acid chain; its full sequence is N-acetyltransferase 8B (232 aa).

At 1–62 the chain is on the cytoplasmic side; that stretch reads MPRFEAQKSS…FLLLLGVPLA (62 aa). Residues 63–83 form a helical; Signal-anchor for type II membrane protein membrane-spanning segment; that stretch reads LVLVSGSWILAVICIFFLLLL. The N-acetyltransferase domain maps to 79-224; that stretch reads FLLLLLRLLA…WRLVDICFIQ (146 aa). At 84-232 the chain is on the lumenal side; sequence LRLLARQPWK…IQLNYSFPSA (149 aa). Residue Lys-109 is modified to N6-acetyllysine.

It belongs to the NAT8 family. Acetylation on Lys-109 modulates enzymatic activity. As to expression, expressed in brain (at protein level).

It is found in the endoplasmic reticulum-Golgi intermediate compartment membrane. The protein resides in the endoplasmic reticulum membrane. The catalysed reaction is L-lysyl-[protein] + acetyl-CoA = N(6)-acetyl-L-lysyl-[protein] + CoA + H(+). Functionally, endoplasmic reticulum (ER)-membrane-bound lysine N-acetyltransferase catalyzing the N6-acetylation of lysine residues in the lumen of the ER in various proteins, including PROM1 and BACE1, using acetyl-CoA as acetyl donor. Thereby, may regulate apoptosis through the acetylation and the regulation of the expression of PROM1. Acetylates and stabilizes BACE1 immature protein, leading to increased steady-state levels in neurons. By acting on BACE1 expression, may regulate amyloid beta-peptide formation. N(6)-lysine acetylation in ER maintains protein homeostasis and regulates reticulophagy. The protein is N-acetyltransferase 8B of Mus musculus (Mouse).